Consider the following 290-residue polypeptide: CMRF35-like molecule 1 (290 aa).

Positions 1–19 (MPLLTLYLLLFWLSGYSIV) are cleaved as a signal peptide. The Ig-like V-type domain maps to 20 to 126 (TQITGPTTVN…LGVTVQVTID (107 aa)). At 20-156 (TQITGPTTVN…DNRHKLLKLS (137 aa)) the chain is on the extracellular side. Intrachain disulfides connect C40–C108 and C54–C62. An N-linked (GlcNAc...) asparagine glycan is attached at N88. The chain crosses the membrane as a helical span at residues 157–177 (VLLPLIFTILLLLLVAASLLA). Residues 178–290 (WRMMKYQQKA…PTEYSTISRP (113 aa)) are Cytoplasmic-facing. A disordered region spans residues 267 to 290 (GHLSSHLPGRGPEEPTEYSTISRP).

This sequence belongs to the CD300 family. In terms of assembly, interacts with PTPN6/SHP-1 in a tyrosine phosphorylation dependent manner. Interacts with IL4R. Phosphorylated on tyrosine. In terms of tissue distribution, highly expressed in spleen, peripheral blood leukocyte and monocyte, and lung. Weakly expressed in thymus, heart, brain, placenta, liver, skeletal muscle, kidney, pancreas, prostate, testis, ovary, small intestine or colon. Expressed selectively in monocytes and monocyte-related cells.

It is found in the cell membrane. Its function is as follows. Acts as an inhibitory receptor for myeloid cells and mast cells. Positively regulates the phagocytosis of apoptotic cells (efferocytosis) via phosphatidylserine (PS) recognition; recognizes and binds PS as a ligand which is expressed on the surface of apoptotic cells. Plays an important role in the maintenance of immune homeostasis, by promoting macrophage-mediated efferocytosis and by inhibiting dendritic cell-mediated efferocytosis. Negatively regulates Fc epsilon receptor-dependent mast cell activation and allergic responses via binding to ceramide and sphingomyelin which act as ligands. May act as a coreceptor for interleukin 4 (IL-4). Associates with and regulates IL-4 receptor alpha-mediated responses by augmenting IL-4- and IL-13-induced signaling. Negatively regulates the Toll-like receptor (TLR) signaling mediated by MYD88 and TRIF through activation of PTPN6/SHP-1 and PTPN11/SHP-2. Inhibits osteoclast formation. Induces macrophage cell death upon engagement. The chain is CMRF35-like molecule 1 (CD300LF) from Homo sapiens (Human).